A 274-amino-acid chain; its full sequence is 2-dehydro-3-deoxyphosphooctonate aldolase (274 aa).

Belongs to the KdsA family.

The protein resides in the cytoplasm. The catalysed reaction is D-arabinose 5-phosphate + phosphoenolpyruvate + H2O = 3-deoxy-alpha-D-manno-2-octulosonate-8-phosphate + phosphate. Its pathway is carbohydrate biosynthesis; 3-deoxy-D-manno-octulosonate biosynthesis; 3-deoxy-D-manno-octulosonate from D-ribulose 5-phosphate: step 2/3. It participates in bacterial outer membrane biogenesis; lipopolysaccharide biosynthesis. This Legionella pneumophila (strain Corby) protein is 2-dehydro-3-deoxyphosphooctonate aldolase.